The chain runs to 58 residues: Large ribosomal subunit protein bL32 (58 aa).

Belongs to the bacterial ribosomal protein bL32 family.

This is Large ribosomal subunit protein bL32 from Sulfurihydrogenibium sp. (strain YO3AOP1).